The primary structure comprises 326 residues: Biotin synthase (326 aa).

Residues 48–277 (FGAGKVDLCS…SARIRMAGGR (230 aa)) enclose the Radical SAM core domain. [4Fe-4S] cluster-binding residues include Cys66, Cys70, and Cys73. Positions 110, 142, 202, and 272 each coordinate [2Fe-2S] cluster.

This sequence belongs to the radical SAM superfamily. Biotin synthase family. Homodimer. [4Fe-4S] cluster serves as cofactor. [2Fe-2S] cluster is required as a cofactor.

It carries out the reaction (4R,5S)-dethiobiotin + (sulfur carrier)-SH + 2 reduced [2Fe-2S]-[ferredoxin] + 2 S-adenosyl-L-methionine = (sulfur carrier)-H + biotin + 2 5'-deoxyadenosine + 2 L-methionine + 2 oxidized [2Fe-2S]-[ferredoxin]. Its pathway is cofactor biosynthesis; biotin biosynthesis; biotin from 7,8-diaminononanoate: step 2/2. Functionally, catalyzes the conversion of dethiobiotin (DTB) to biotin by the insertion of a sulfur atom into dethiobiotin via a radical-based mechanism. The protein is Biotin synthase of Heliobacterium modesticaldum (strain ATCC 51547 / Ice1).